A 326-amino-acid polypeptide reads, in one-letter code: 3-dehydrosphinganine reductase TSC10A (326 aa).

Residues 1 to 7 (MAAISPL) are Lumenal-facing. The chain crosses the membrane as a helical span at residues 8-28 (FLLFLIPIIPLSLLAILALIV). The Cytoplasmic portion of the chain corresponds to 29-264 (RPRPIKIPIK…KAMDGIKAGN (236 aa)). Residues G46, S48, S49, G50, R71, K75, and D97 each coordinate NADPH. Positions 46–50 (GGSSG) match the GXSXG motif. S174 (proton donor) is an active-site residue. Y188 acts as the Proton acceptor in catalysis. Positions 188 and 192 each coordinate NADP(+). K192 functions as the Lowers pKa of active site Tyr in the catalytic mechanism. The chain crosses the membrane as a helical span at residues 265–285 (FTVSCNFEGFLLSLATTGMSP). Residues 286-288 (QRS) lie on the Lumenal side of the membrane. Residues 289–309 (FWLAFLEVITAGPIRLIALFF) form a helical membrane-spanning segment. The Cytoplasmic segment spans residues 310–326 (QWDWYKAIEKWSKTKTK).

Belongs to the short-chain dehydrogenases/reductases (SDR) family. As to expression, expressed in roots, leaves, stems, flowers and siliques.

It localises to the endoplasmic reticulum membrane. It catalyses the reaction sphinganine + NADP(+) = 3-oxosphinganine + NADPH + H(+). Its pathway is lipid metabolism; sphingolipid metabolism. Functionally, catalyzes the reduction of 3'-oxosphinganine (3-ketodihydrosphingosine/KDS) to sphinganine (dihydrosphingosine/DHS), the second step of de novo sphingolipid biosynthesis. In plants, sphingolipids seems to play a critical role in mineral ion homeostasis, most likely through their involvement in the ion transport functionalities of membrane systems in the root. Lacks stereospecificity and can also produce L-threo-DHS in addition to D-erythro-DHS. The polypeptide is 3-dehydrosphinganine reductase TSC10A (TSC10A) (Arabidopsis thaliana (Mouse-ear cress)).